The chain runs to 245 residues: UPF0319 protein VV0984 (245 aa).

Residues 1 to 20 (MRYIGKWMMLGALVSSSVFA) form the signal peptide.

The protein belongs to the UPF0319 family.

The polypeptide is UPF0319 protein VV0984 (Vibrio vulnificus (strain YJ016)).